A 230-amino-acid chain; its full sequence is Ribose-5-phosphate isomerase A (230 aa).

Substrate is bound by residues 32–35 (TGST), 85–88 (DGAD), and 98–101 (KGGG). E107 acts as the Proton acceptor in catalysis. K125 is a binding site for substrate.

The protein belongs to the ribose 5-phosphate isomerase family. In terms of assembly, homodimer.

It carries out the reaction aldehydo-D-ribose 5-phosphate = D-ribulose 5-phosphate. It functions in the pathway carbohydrate degradation; pentose phosphate pathway; D-ribose 5-phosphate from D-ribulose 5-phosphate (non-oxidative stage): step 1/1. Its function is as follows. Catalyzes the reversible conversion of ribose-5-phosphate to ribulose 5-phosphate. The protein is Ribose-5-phosphate isomerase A of Burkholderia ambifaria (strain MC40-6).